The chain runs to 421 residues: WD repeat and SOCS box-containing protein 1 (421 aa).

WD repeat units lie at residues 32-71 (KCGRENWTVAFAPDGSYFAWSQGHRTVKLVPWSQCLQNFL), 124-165 (SRCV…LLLN), 168-208 (DHTE…NMMK), 212-251 (GHQNWVYSCAFSPDSSMLCSVGASKAVFLWNMDKYTMIRK), 254-293 (GHHHDVVACDFSPDGALLATASYDTRVYIWDPHNGDILME), and 309-346 (ANDRWVRSVSFSHDGLHVASLADDKMVRFWRIDEDYPV). The SOCS box domain maps to 372-421 (DGSVYFWATPRQVPSLQHLCRMSIRRVMPTQEVQELPIPSKLLEFLSYRI).

As to quaternary structure, interacts with DIO2. Component of the probable ECS(WSB1) E3 ubiquitin ligase complex which contains CUL5, RNF7/RBX2, Elongin BC complex and WSB1. Component of a probable ECS-like E3 ubiquitin-protein ligase complex which contains CUL5, RBX1, Elongin BC complex and WSB1. Interacts with CUL5, RNF7, ELOB and ELOC. Binds to HIPK2 through WD40 repeats.

The protein operates within protein modification; protein ubiquitination. Its function is as follows. Probable substrate-recognition component of a SCF-like ECS (Elongin-Cullin-SOCS-box protein) E3 ubiquitin ligase complex which mediates the ubiquitination and subsequent proteasomal degradation of target proteins. Recognizes type II iodothyronine deiodinase/DIO2. Confers constitutive instability to HIPK2 through proteasomal degradation. In Homo sapiens (Human), this protein is WD repeat and SOCS box-containing protein 1 (WSB1).